The chain runs to 291 residues: ATP synthase gamma chain (291 aa).

Belongs to the ATPase gamma chain family. In terms of assembly, F-type ATPases have 2 components, CF(1) - the catalytic core - and CF(0) - the membrane proton channel. CF(1) has five subunits: alpha(3), beta(3), gamma(1), delta(1), epsilon(1). CF(0) has three main subunits: a, b and c.

It localises to the cell inner membrane. Its function is as follows. Produces ATP from ADP in the presence of a proton gradient across the membrane. The gamma chain is believed to be important in regulating ATPase activity and the flow of protons through the CF(0) complex. The protein is ATP synthase gamma chain of Burkholderia mallei (strain NCTC 10247).